The following is a 347-amino-acid chain: MAIDEDKQKAISLAIKQIDKVFGKGALVRLGDKQVEKIDSISTGSLGLDLALGIGGVPKGRIIEIYGPESSGKTTLSLHIIAECQKNGGVCAFIDAEHALDVHYAKRLGVDTENLLVSQPDTGEQALEILETITRSGGIDLVVVDSVAALTPKAEIDGDMGDQHVGLQARLMSHALRKITGVLHKMNTTLIFINQIRMKIGMMGYGSPETTTGGNALKFYASVRIDIRRIASLKQNEQHIGNRAKAKVVKNKVAPPFREAEFDIMFGEGISKEGEIIDYGVKLDIVDKSGAWLSYQDKKLGQGRENAKALLKEDKALADEITLKIKESIGSNEEIMPLPDEPLEEME.

An ATP-binding site is contributed by 67–74 (GPESSGKT).

Belongs to the RecA family. Post-translationally, the protein migrates as a 40 kDa protein in strains 69A and NCTC 11637. When overexpressed in E.coli a 38 kDa protein is made which is unable to complement the E.coli deletion mutant. It has been suggested this size difference is due to a post-translational modification.

The protein resides in the cytoplasm. Its function is as follows. Can catalyze the hydrolysis of ATP in the presence of single-stranded DNA, the ATP-dependent uptake of single-stranded DNA by duplex DNA, and the ATP-dependent hybridization of homologous single-stranded DNAs. It interacts with LexA causing its activation and leading to its autocatalytic cleavage. Functionally, deletion of this gene leads to the inability of the bacteria to perform homologous recombination, and markedly increases UV sensitivity. This is Protein RecA from Helicobacter pylori (strain ATCC 700392 / 26695) (Campylobacter pylori).